The following is a 502-amino-acid chain: MAPLKLNSRNLSQIFAAGKSLVKVPTYQRNGAVKEGIVHIGVGGFHRAHLAVYVDRLMQEQGVTDYAICGVGLQPFDSTMRDALASQDNLYTVIERSAKGSFAHVIGSINSYLFAPDDREAVIAKMANPDTRIVSLTITESGYYYNENTHELQKEHPDIQFDLNPVNENKPRTTFGFLYAALERRHRLGLKPFTVMSCDNMQKNGSITRHMLESFARQRNPKVAEWIAEEGAFPNAMVDRITPQTSATDKTALAENFGIEDSWPVVTEPFMQWVIEDKFSDGRPPFEKIGVQVVKDVHAVEQFEKHKLRLLNGSHSAIGYPGQLAGFNYVHEVMEHPLFSKFVWQMMQQEVKPLLPEIPGVNIDDYCNTLIERFTNPTIMDQLPRICLNASGKIPQFIMPSIAEAIWVTAPFRRLCFVAAAWFCYIKGIDDSGKAFEVVDPMLNELQAKARAGGTNPSELLSIKNLFGDDLRTDPRFLKEVTKAMEDITRDGILKTLPKYID.

37-48 contributes to the NAD(+) binding site; the sequence is IVHIGVGGFHRA.

This sequence belongs to the mannitol dehydrogenase family. Monomer.

It catalyses the reaction D-mannitol + NAD(+) = D-fructose + NADH + H(+). Catalyzes the NAD(H)-dependent interconversion of D-fructose and D-mannitol in the mannitol metabolic pathway. In Aspergillus clavatus (strain ATCC 1007 / CBS 513.65 / DSM 816 / NCTC 3887 / NRRL 1 / QM 1276 / 107), this protein is Mannitol 2-dehydrogenase.